A 209-amino-acid polypeptide reads, in one-letter code: Guanylate kinase (209 aa).

In terms of domain architecture, Guanylate kinase-like spans 5–184 (GLLIVFSGPS…AAERVKRVIE (180 aa)). 12 to 19 (GPSGVGKG) contributes to the ATP binding site.

It belongs to the guanylate kinase family.

It localises to the cytoplasm. It carries out the reaction GMP + ATP = GDP + ADP. Its function is as follows. Essential for recycling GMP and indirectly, cGMP. The protein is Guanylate kinase of Streptococcus agalactiae serotype Ia (strain ATCC 27591 / A909 / CDC SS700).